The chain runs to 244 residues: Type III pantothenate kinase (244 aa).

An ATP-binding site is contributed by 8–15 (DQGNSACK). Substrate is bound at residue 94-97 (GADR). Aspartate 96 acts as the Proton acceptor in catalysis. Aspartate 117 is a K(+) binding site. Threonine 120 contributes to the ATP binding site. Threonine 175 provides a ligand contact to substrate.

Belongs to the type III pantothenate kinase family. Homodimer. It depends on NH4(+) as a cofactor. Requires K(+) as cofactor.

It is found in the cytoplasm. The catalysed reaction is (R)-pantothenate + ATP = (R)-4'-phosphopantothenate + ADP + H(+). It functions in the pathway cofactor biosynthesis; coenzyme A biosynthesis; CoA from (R)-pantothenate: step 1/5. Functionally, catalyzes the phosphorylation of pantothenate (Pan), the first step in CoA biosynthesis. This is Type III pantothenate kinase from Porphyromonas gingivalis (strain ATCC 33277 / DSM 20709 / CIP 103683 / JCM 12257 / NCTC 11834 / 2561).